The sequence spans 295 residues: Chromatin modification-related protein YNG2 (295 aa).

A disordered region spans residues Asn-151 to Asp-208. Over residues Ser-156–Ala-171 the composition is skewed to low complexity. Residues Gly-175 to Gln-190 are compositionally biased toward basic residues. The segment at Gln-233–Glu-282 adopts a PHD-type zinc-finger fold. Zn(2+) contacts are provided by Cys-236, Cys-238, Cys-249, Cys-254, His-260, Cys-263, Cys-276, and Cys-279.

This sequence belongs to the ING family. In terms of assembly, interacts with H3K4me3 and to a lesser extent with H3K4me2. Component of the NuA4 histone acetyltransferase complex.

It is found in the nucleus. Component of the NuA4 histone acetyltransferase complex which is involved in transcriptional activation of selected genes principally by acetylation of nucleosomal histone H4 and H2A. The NuA4 complex is also involved in DNA repair. Involved in cell cycle progression and meiosis. This chain is Chromatin modification-related protein YNG2 (YNG2), found in Kluyveromyces lactis (strain ATCC 8585 / CBS 2359 / DSM 70799 / NBRC 1267 / NRRL Y-1140 / WM37) (Yeast).